We begin with the raw amino-acid sequence, 948 residues long: FRIGIDA-like protein 5 (948 aa).

Residues 47–164 (DSTRSVLEER…VEKHRERIVA (118 aa)) adopt a coiled-coil conformation. 3 disordered regions span residues 447-500 (ESAQ…APSQ), 518-538 (VKESGADHQPDTIATHPSGTE), and 804-894 (RNTS…YPSH). Basic and acidic residues-rich tracts occupy residues 459–475 (SYEKRQSTTKGVEKSEA) and 518–527 (VKESGADHQP). The segment covering 807–817 (SNGSGSGSASS) has biased composition (low complexity). Polar residues predominate over residues 818-830 (KPDSTIKQSQTAK). A compositionally biased stretch (basic residues) spans 861–872 (FSKKNKRGKKRS). The span at 873–894 (MSGNNQSSGHIASHTSNHYPSH) shows a compositional bias: polar residues.

The protein belongs to the Frigida family. Expressed at low levels during seed development.

This is FRIGIDA-like protein 5 (FRL5) from Arabidopsis thaliana (Mouse-ear cress).